We begin with the raw amino-acid sequence, 360 residues long: DNA replication and repair protein RecF (360 aa).

30–37 (GHNGSGKT) contacts ATP.

It belongs to the RecF family.

It is found in the cytoplasm. The RecF protein is involved in DNA metabolism; it is required for DNA replication and normal SOS inducibility. RecF binds preferentially to single-stranded, linear DNA. It also seems to bind ATP. This chain is DNA replication and repair protein RecF, found in Actinobacillus pleuropneumoniae serotype 3 (strain JL03).